Reading from the N-terminus, the 207-residue chain is Glycerol-3-phosphate acyltransferase (207 aa).

6 helical membrane passes run 8–28 (NIVFYLLAYLIGSIPFGLILA), 64–84 (LGIATVLLDALKGTLVLLVGI), 92–112 (TLWAIAVLAVLGHCYSIYLGL), 122–142 (LGVYIVLIPYSTLIGAVVWIV), 154–174 (SLLGLIAAVISAIFIYNGLGI), and 176–196 (SNIPMYLIAFIILYKHIPNIV).

The protein belongs to the PlsY family. Probably interacts with PlsX.

It localises to the cell inner membrane. It carries out the reaction an acyl phosphate + sn-glycerol 3-phosphate = a 1-acyl-sn-glycero-3-phosphate + phosphate. Its pathway is lipid metabolism; phospholipid metabolism. In terms of biological role, catalyzes the transfer of an acyl group from acyl-phosphate (acyl-PO(4)) to glycerol-3-phosphate (G3P) to form lysophosphatidic acid (LPA). This enzyme utilizes acyl-phosphate as fatty acyl donor, but not acyl-CoA or acyl-ACP. The sequence is that of Glycerol-3-phosphate acyltransferase from Aliarcobacter butzleri (strain RM4018) (Arcobacter butzleri).